Here is an 81-residue protein sequence, read N- to C-terminus: Translational regulator CsrA (81 aa).

A compositionally biased stretch (polar residues) spans 59 to 71 (SQMQHLEQGNFPT). Residues 59-81 (SQMQHLEQGNFPTSFDDDDFFNR) are disordered.

This sequence belongs to the CsrA/RsmA family. Homodimer; the beta-strands of each monomer intercalate to form a hydrophobic core, while the alpha-helices form wings that extend away from the core.

It localises to the cytoplasm. Its function is as follows. A key translational regulator that binds mRNA to regulate translation initiation and/or mRNA stability. Mediates global changes in gene expression, shifting from rapid growth to stress survival by linking envelope stress, the stringent response and the catabolite repression systems. Usually binds in the 5'-UTR; binding at or near the Shine-Dalgarno sequence prevents ribosome-binding, repressing translation, binding elsewhere in the 5'-UTR can activate translation and/or stabilize the mRNA. Its function is antagonized by small RNA(s). The chain is Translational regulator CsrA from Psychrobacter sp. (strain PRwf-1).